The primary structure comprises 297 residues: Phosphatidylglycerol--prolipoprotein diacylglyceryl transferase (297 aa).

Transmembrane regions (helical) follow at residues 20–40 (FITIRWYGLLISVSVLIGLFI), 57–77 (EILPSLIIFSIIGARAYYVIF), 107–127 (WEGGIAIHGGLIGGLISIIFF), and 133–153 (IHLKTFIDILIPSIILGQSIG). An a 1,2-diacyl-sn-glycero-3-phospho-(1'-sn-glycerol)-binding site is contributed by R154. A run of 3 helical transmembrane segments spans residues 193 to 213 (PTFLYESLWNLLVFIFLILIF), 225 to 245 (GFISCLYLICYSFGRFWIEGL), and 266 to 286 (AQFISIFLFSSGLIGIFFLRL).

It belongs to the Lgt family.

It localises to the cell inner membrane. It carries out the reaction L-cysteinyl-[prolipoprotein] + a 1,2-diacyl-sn-glycero-3-phospho-(1'-sn-glycerol) = an S-1,2-diacyl-sn-glyceryl-L-cysteinyl-[prolipoprotein] + sn-glycerol 1-phosphate + H(+). It functions in the pathway protein modification; lipoprotein biosynthesis (diacylglyceryl transfer). Its function is as follows. Catalyzes the transfer of the diacylglyceryl group from phosphatidylglycerol to the sulfhydryl group of the N-terminal cysteine of a prolipoprotein, the first step in the formation of mature lipoproteins. In Prochlorococcus marinus (strain MIT 9301), this protein is Phosphatidylglycerol--prolipoprotein diacylglyceryl transferase.